A 390-amino-acid chain; its full sequence is Homoserine O-acetyltransferase (390 aa).

The region spanning 55-366 (NAILINHAFS…ESDCGHDAFL (312 aa)) is the AB hydrolase-1 domain. The active-site Nucleophile is the Ser163. Position 232 (Arg232) interacts with substrate. Catalysis depends on residues Asp329 and His362. Asp363 contributes to the substrate binding site.

It belongs to the AB hydrolase superfamily. MetX family. As to quaternary structure, homodimer.

The protein resides in the cytoplasm. It catalyses the reaction L-homoserine + acetyl-CoA = O-acetyl-L-homoserine + CoA. It functions in the pathway amino-acid biosynthesis; L-methionine biosynthesis via de novo pathway; O-acetyl-L-homoserine from L-homoserine: step 1/1. Functionally, transfers an acetyl group from acetyl-CoA to L-homoserine, forming acetyl-L-homoserine. The sequence is that of Homoserine O-acetyltransferase from Desulfotalea psychrophila (strain LSv54 / DSM 12343).